Reading from the N-terminus, the 969-residue chain is Activity-dependent neuroprotective protein a (969 aa).

A C2H2-type 1 zinc finger spans residues 74 to 97 (FCCSDCPFASKYFSAYKNHFRNVH). The C2H2-type 2; atypical zinc-finger motif lies at 107–129 (LNCSYCTYSGNKRTLETHVRLFH). 2 consecutive C2H2-type zinc fingers follow at residues 169 to 192 (YYCK…YREH) and 221 to 244 (IHCK…IEFH). Residues 401–423 (KICTICNELFPESAYSAHFEKEH) form a C2H2-type 5; atypical zinc finger. The C2H2-type 6; atypical zinc-finger motif lies at 443–464 (SKCLYCNRYLPSDSLLNHMLVH). Residues 466–489 (LSCPHCHSTFHEVEKIVAHNRLAH) form a C2H2-type 7 zinc finger. The C2H2-type 8; atypical zinc finger occupies 583–608 (TLCPLCFTILKGPISDALAHHLRDSH). The segment at 623–647 (YKCIHCLGVYTSNMTASTITLHLVH) adopts a C2H2-type 9; atypical zinc-finger fold. The interval 659–689 (KPITTGLRSPGAGSLKRELVTPDPSDPKRRK) is disordered. The segment at residues 732 to 774 (AYFNRHPYPSQREVEKLAASLWLWKSDVASHFGNHRRLCDRDF) is a DNA-binding region (homeobox). Residues 911-949 (DVRANRSSPRVGPKVLDGSVSSSSPDEATWSGNMSSEES) form a disordered region. The segment covering 929–946 (SVSSSSPDEATWSGNMSS) has biased composition (polar residues).

Interacts with catenin beta-1/ctnnb1.

The protein resides in the nucleus. Its function is as follows. May be involved in transcriptional regulation. Positively modulates wnt-beta-catenin/ctnnb1 signaling. Required for embryonic neurogenesis. Required for progression through late erythroid differentiation. In Danio rerio (Zebrafish), this protein is Activity-dependent neuroprotective protein a.